A 967-amino-acid chain; its full sequence is Regulator of G-protein signaling 3 (967 aa).

Positions 18–95 (QITIRRGKDG…EIILLVWRVV (78 aa)) constitute a PDZ domain. The disordered stretch occupies residues 115-135 (THDLLSPPNKREKNCTHGAPT). R167 carries the omega-N-methylarginine modification. Positions 389–705 (QLAATPTERK…EGGLSLRVQN (317 aa)) are disordered. Polar residues-rich tracts occupy residues 476-486 (LPSSKNPSPSQ), 512-549 (SPSSEDIATCQNPPQSPETSTSKDSPPGQGSSPTTEVP), and 577-597 (SSASDQNVLPSQESPPSQGSL). Over residues 650 to 676 (GEDEDAEEGEEGEEGEEDEEDDTNDDN) the composition is skewed to acidic residues. Residues 677-687 (YGDRNEAKRSS) show a composition bias toward basic and acidic residues. Residues S713, S716, S748, and S777 each carry the phosphoserine modification. Residues 807–830 (FRRRNESPGAQPAGKADKTTKSFK) form a disordered region. The segment covering 821-830 (KADKTTKSFK) has biased composition (basic and acidic residues). Positions 842–967 (SLEKLLLHKY…INQKKMSPPL (126 aa)) constitute an RGS domain.

In terms of assembly, binds EFNB1 and EFNB2. Binds the GNB1-GNG2 heterodimer. Binds ESR1. In terms of processing, phosphorylated by cyclic GMP-dependent protein kinase. Post-translationally, ISGylated. In terms of tissue distribution, detected in kidney, uterus, ovary, heart, brain, spleen, lung and testis.

It localises to the cytoplasm. Its subcellular location is the membrane. The protein localises to the nucleus. Down-regulates signaling from heterotrimeric G-proteins by increasing the GTPase activity of the alpha subunits, thereby driving them into their inactive GDP-bound form. Down-regulates G-protein-mediated release of inositol phosphates and activation of MAP kinases. This is Regulator of G-protein signaling 3 (Rgs3) from Rattus norvegicus (Rat).